The chain runs to 241 residues: Triosephosphate isomerase (241 aa).

Asparagine 9–lysine 11 serves as a coordination point for substrate. Histidine 96 serves as the catalytic Electrophile. The Proton acceptor role is filled by glutamate 165. Residues glycine 171, serine 204, and glycine 225–glycine 226 contribute to the substrate site.

This sequence belongs to the triosephosphate isomerase family. In terms of assembly, homodimer.

It is found in the cytoplasm. The enzyme catalyses D-glyceraldehyde 3-phosphate = dihydroxyacetone phosphate. The protein operates within carbohydrate biosynthesis; gluconeogenesis. It functions in the pathway carbohydrate degradation; glycolysis; D-glyceraldehyde 3-phosphate from glycerone phosphate: step 1/1. Functionally, involved in the gluconeogenesis. Catalyzes stereospecifically the conversion of dihydroxyacetone phosphate (DHAP) to D-glyceraldehyde-3-phosphate (G3P). This chain is Triosephosphate isomerase, found in Gloeothece citriformis (strain PCC 7424) (Cyanothece sp. (strain PCC 7424)).